Consider the following 474-residue polypeptide: Sulfide dehydrogenase subunit alpha (474 aa).

A propeptide spanning residues 1 to 2 (MP) is cleaved from the precursor. Cys42, Cys45, Cys52, and Cys56 together coordinate [4Fe-4S] cluster. [3Fe-4S] cluster is bound by residues Cys101, Cys107, and Cys111.

As to quaternary structure, heterodimer of alpha and beta subunits. The cofactor is FAD. It depends on [3Fe-4S] cluster as a cofactor. Requires [4Fe-4S] cluster as cofactor.

Its subcellular location is the cytoplasm. It catalyses the reaction n sulfur + hydrogen sulfide + NADP(+) = (n+1) sulfur + NADPH. It carries out the reaction 2 reduced [2Fe-2S]-[ferredoxin] + NADP(+) + H(+) = 2 oxidized [2Fe-2S]-[ferredoxin] + NADPH. A bifunctional enzyme that catalyzes the reduction of elemental sulfur or polysulfide to hydrogen sulfide with NADPH as electron donor. Also functions as a reduced ferredoxin:NADP oxidoreductase with a very high affinity for reduced ferredoxin. Exhibits a broad specificity for various physiological and non-physiological substrates with varied reduction potentials such as methyl viologen, benzyl viologen, FAD, FMN, methylene blue, 2,6-dichlorophenolindophenol (DCIP), cytochrome C and ferricyanide with highest preference for benzyl viologen. Does not reduce fumarate, succinate, nitrate, nitrite, sulfate, sulfite or protons. Does not possess any hydrogenase activity or NADPH-dependent glutamate synthase activity. The polypeptide is Sulfide dehydrogenase subunit alpha (Pyrococcus furiosus (strain ATCC 43587 / DSM 3638 / JCM 8422 / Vc1)).